Consider the following 366-residue polypeptide: Isocitrate dehydrogenase [NAD] subunit alpha, mitochondrial (366 aa).

The transit peptide at 1 to 27 directs the protein to the mitochondrion; the sequence is MAGPAWISKVSRLLGAFHNPKQVTRGF. Lysine 77 is modified (N6-succinyllysine). Threonine 101 carries the phosphothreonine modification. Substrate-binding residues include arginine 115, arginine 125, and arginine 146. Lysine 223 bears the N6-acetyllysine mark. Mg(2+)-binding residues include aspartate 233, aspartate 257, and aspartate 261. The residue at position 343 (lysine 343) is an N6-acetyllysine; alternate. Lysine 343 carries the N6-succinyllysine; alternate modification. Lysine 350 carries the N6-succinyllysine modification.

It belongs to the isocitrate and isopropylmalate dehydrogenases family. Heterooligomer of subunits alpha (IDH3A), beta (IDH3B), and gamma (IDH3G) in the apparent ratio of 2:1:1. The heterodimer containing one IDH3A and one IDH3B subunit and the heterodimer containing one IDH3A and one IDH3G subunit assemble into a heterotetramer (which contains two subunits of IDH3A, one of IDH3B and one of IDH3G) and further into the heterooctamer. Mg(2+) is required as a cofactor. It depends on Mn(2+) as a cofactor.

It localises to the mitochondrion. It catalyses the reaction D-threo-isocitrate + NAD(+) = 2-oxoglutarate + CO2 + NADH. Its activity is regulated as follows. The heterotetramer and the heterodimer composed of IDH3A and IDH3G subunits can be allosterically activated by citrate (CIT) or/and ADP, and the two activators can act independently or synergistically. The heterodimer composed of IDH3A and IDH3B subunits cannot be allosterically regulated and the allosteric regulation of the heterotetramer is through the IDH3G subunit and not the IDH3B subunit. The IDH3G subunit contains the allosteric site which consists of a CIT-binding site and an ADP-binding site, and the binding of CIT and ADP causes conformational changes at the allosteric site which are transmitted to the active site in the catalytic subunit (IDH3A) through a cascade of conformational changes at the heterodimer interface, leading to stabilization of the isocitrate-binding at the active site and thus activation of the enzyme. ATP can activate the heterotetramer and the heterodimer composed of IDH3A and IDH3G subunits at low concentrations but inhibits their activities at high concentrations, whereas ATP exhibits only inhibitory effect on the heterodimer composed of IDH3A and IDH3B subunits. In terms of biological role, catalytic subunit of the enzyme which catalyzes the decarboxylation of isocitrate (ICT) into alpha-ketoglutarate. The heterodimer composed of the alpha (IDH3A) and beta (IDH3B) subunits and the heterodimer composed of the alpha (IDH3A) and gamma (IDH3G) subunits, have considerable basal activity but the full activity of the heterotetramer (containing two subunits of IDH3A, one of IDH3B and one of IDH3G) requires the assembly and cooperative function of both heterodimers. This chain is Isocitrate dehydrogenase [NAD] subunit alpha, mitochondrial, found in Homo sapiens (Human).